A 235-amino-acid polypeptide reads, in one-letter code: CMP-N,N'-diacetyllegionaminic acid synthase (235 aa).

Belongs to the CMP-NeuNAc synthase family.

It catalyses the reaction N,N-diacetyllegionaminate + CTP = CMP-N,N-diacetyllegionaminate + diphosphate. In terms of biological role, involved in biosynthesis of legionaminic acid (5,7-diamino-3,5,7,9-tetradeoxy-D-glycero-D-galacto-non-2-ulosonic acid)(Leg), a sialic acid-like derivative that is incorporated into flagellin via O-linkage to Ser/Thr. Catalyzes the conversion of N,N'-diacetyllegionaminic acid (Leg5Ac7Ac) and CTP into CMP-N,N'-diacetyllegionaminic acid (CMP-Leg5Ac7Ac). This is CMP-N,N'-diacetyllegionaminic acid synthase (legF) from Campylobacter jejuni subsp. jejuni serotype O:2 (strain ATCC 700819 / NCTC 11168).